Consider the following 173-residue polypeptide: MKTKEIVDDVTMKRAITRITYEIIERNKQLDNVVLAGIKTRGVFLARRIQERLHQLEGLDLPIGELDTKPFRDDMRVEEDTTLMSVDITGKDVILIDDVLYTGRTIRAAIDNLVSLGRPARVSLAVLVDRGHRELPIRADYVGKNIPTSSVEEIVVEVVEVDGRDRVSIIDPT.

Substrate contacts are provided by residues 40–41, 97–105, and arginine 130; these read TR and DDVLYTGRT. The short motif at 93–105 is the PRPP-binding element; sequence VILIDDVLYTGRT.

This sequence belongs to the purine/pyrimidine phosphoribosyltransferase family. PyrR subfamily. In terms of assembly, homodimer and homohexamer; in equilibrium.

The enzyme catalyses UMP + diphosphate = 5-phospho-alpha-D-ribose 1-diphosphate + uracil. Regulates transcriptional attenuation of the pyrimidine nucleotide (pyr) operon by binding in a uridine-dependent manner to specific sites on pyr mRNA. This disrupts an antiterminator hairpin in the RNA and favors formation of a downstream transcription terminator, leading to a reduced expression of downstream genes. Functionally, also displays a weak uracil phosphoribosyltransferase activity which is not physiologically significant. This is Bifunctional protein PyrR from Streptococcus pyogenes serotype M6 (strain ATCC BAA-946 / MGAS10394).